The following is a 120-amino-acid chain: Aspartate 1-decarboxylase (120 aa).

Ser-25 functions as the Schiff-base intermediate with substrate; via pyruvic acid in the catalytic mechanism. The residue at position 25 (Ser-25) is a Pyruvic acid (Ser). Thr-57 provides a ligand contact to substrate. Tyr-58 functions as the Proton donor in the catalytic mechanism. 73-75 is a binding site for substrate; sequence GAA.

This sequence belongs to the PanD family. As to quaternary structure, heterooctamer of four alpha and four beta subunits. Pyruvate serves as cofactor. In terms of processing, is synthesized initially as an inactive proenzyme, which is activated by self-cleavage at a specific serine bond to produce a beta-subunit with a hydroxyl group at its C-terminus and an alpha-subunit with a pyruvoyl group at its N-terminus.

The protein resides in the cytoplasm. The catalysed reaction is L-aspartate + H(+) = beta-alanine + CO2. The protein operates within cofactor biosynthesis; (R)-pantothenate biosynthesis; beta-alanine from L-aspartate: step 1/1. Its function is as follows. Catalyzes the pyruvoyl-dependent decarboxylation of aspartate to produce beta-alanine. The polypeptide is Aspartate 1-decarboxylase (Deinococcus geothermalis (strain DSM 11300 / CIP 105573 / AG-3a)).